The following is a 145-amino-acid chain: SsrA-binding protein (145 aa).

It belongs to the SmpB family.

Its subcellular location is the cytoplasm. Its function is as follows. Required for rescue of stalled ribosomes mediated by trans-translation. Binds to transfer-messenger RNA (tmRNA), required for stable association of tmRNA with ribosomes. tmRNA and SmpB together mimic tRNA shape, replacing the anticodon stem-loop with SmpB. tmRNA is encoded by the ssrA gene; the 2 termini fold to resemble tRNA(Ala) and it encodes a 'tag peptide', a short internal open reading frame. During trans-translation Ala-aminoacylated tmRNA acts like a tRNA, entering the A-site of stalled ribosomes, displacing the stalled mRNA. The ribosome then switches to translate the ORF on the tmRNA; the nascent peptide is terminated with the 'tag peptide' encoded by the tmRNA and targeted for degradation. The ribosome is freed to recommence translation, which seems to be the essential function of trans-translation. The chain is SsrA-binding protein from Mycoplasmopsis pulmonis (strain UAB CTIP) (Mycoplasma pulmonis).